A 79-amino-acid polypeptide reads, in one-letter code: Protein FAM236C (79 aa).

The disordered stretch occupies residues 19-48 (KGPQKDPEELVAVSDTAEDPSSGTGLPREP).

Belongs to the FAM236 family.

The sequence is that of Protein FAM236C from Homo sapiens (Human).